Consider the following 352-residue polypeptide: Protein Wnt-3a (352 aa).

A signal peptide spans 1-18; sequence MASFGYFLFLCGLSQALS. C77 and C88 are oxidised to a cystine. N87 and N92 each carry an N-linked (GlcNAc...) asparagine glycan. Cystine bridges form between C128-C136, C138-C155, C203-C217, C205-C212, C281-C312, C297-C307, C311-C351, C327-C342, C329-C339, and C334-C335. Residue S209 is the site of O-palmitoleoyl serine; by PORCN attachment. N298 carries N-linked (GlcNAc...) asparagine glycosylation.

This sequence belongs to the Wnt family. Post-translationally, palmitoleoylation is required for efficient binding to frizzled receptors. Depalmitoleoylation leads to inhibit the Wnt signaling pathway. Disulfide bonds have critical and distinct roles in secretion and activity. Loss of each conserved cysteine in WNT3A results in high molecular weight oxidized Wnt oligomers, which are formed through inter-Wnt disulfide bonding. In terms of tissue distribution, expressed in cornea. Isoform 1 is expressed in the primitive streak, dorsal neural tube, proximal otic vesicle, the apical ectodermal ridge and the epithelium of feather buds.

The protein resides in the secreted. The protein localises to the extracellular space. It is found in the extracellular matrix. It localises to the cytoplasm. Functionally, ligand for members of the frizzled family of seven transmembrane receptors. Functions in the canonical Wnt signaling pathway that results in activation of transcription factors of the TCF/LEF family. Regulates chick apical ectodermal ridge formation. Required for normal embryonic mesoderm development and formation of caudal somites. Required for normal morphogenesis of the developing neural tube. The polypeptide is Protein Wnt-3a (WNT3A) (Gallus gallus (Chicken)).